The sequence spans 372 residues: Lysophosphatidic acid receptor 5 (372 aa).

At 1 to 30 (MFANSSANTTSTNSSVLQCPDYRDTHRLHM) the chain is on the extracellular side. Asn-4, Asn-8, and Asn-13 each carry an N-linked (GlcNAc...) asparagine glycan. A helical transmembrane segment spans residues 31–51 (VVYSLVLATGLPLNALALWVF). At 52-59 (LRVLRVHS) the chain is on the cytoplasmic side. Residues 60-80 (VVSVYMCNLAASDLLFTLSLP) form a helical membrane-spanning segment. Residues 81–100 (LRLSYYAQHHWPFPGFLCQT) are Extracellular-facing. The cysteines at positions 98 and 179 are disulfide-linked. A helical membrane pass occupies residues 101-121 (SGAIFQMNMYGSCLFLMLINV). The Cytoplasmic segment spans residues 122–140 (DRYAAIVHPLRLRHLRRPR). Residues 141-161 (VARRLCLGVWALILLFAVPAA) traverse the membrane as a helical segment. Residues 162 to 191 (RVHSPSHCTYKNITVRLCFESFSDELWKGR) are Extracellular-facing. The N-linked (GlcNAc...) asparagine glycan is linked to Asn-173. Residues 192–212 (LLPLLLLAEILGFLLPLAAVV) form a helical membrane-spanning segment. The Cytoplasmic segment spans residues 213-243 (YSSGRVFWTLARPDATQSQRRRKTVRLLLAN). A helical membrane pass occupies residues 244-264 (LIIFLLCFVPYNSTLAVYGLL). At 265-280 (RANLVKNSIQDRDQVR) the chain is on the extracellular side. The chain crosses the membrane as a helical span at residues 281–301 (GVLMIMVLLAGANCVLDPLVY). The Cytoplasmic segment spans residues 302 to 372 (YFSAEGFRNT…PDNCSQDSAL (71 aa)).

It belongs to the G-protein coupled receptor 1 family.

Its subcellular location is the cell membrane. Its function is as follows. Receptor for lysophosphatidic acid (LPA), a mediator of diverse cellular activities. The protein is Lysophosphatidic acid receptor 5 (Lpar5) of Mus musculus (Mouse).